Consider the following 714-residue polypeptide: Elongation factor G-like protein (714 aa).

A tr-type G domain is found at Gly-21–Met-289. The G1 stretch occupies residues Gly-30–Thr-37. Gly-30–Thr-37 serves as a coordination point for GTP. Residues Gln-73–Gly-77 are G2. The segment at Asp-94–Gly-97 is G3. GTP contacts are provided by residues Asp-94–Tyr-98 and Thr-148–Asp-151. The tract at residues Thr-148–Asp-151 is G4. Positions Cys-267–Ser-269 are G5.

Belongs to the TRAFAC class translation factor GTPase superfamily. Classic translation factor GTPase family. EF-G/EF-2 subfamily.

This Mycobacterium tuberculosis (strain ATCC 25618 / H37Rv) protein is Elongation factor G-like protein.